The following is a 566-amino-acid chain: ATP-dependent RNA helicase DBP3 (566 aa).

Residues Met1 to Asn139 form a disordered region. Basic residues predominate over residues Asp39–Lys58. Over residues Ser81–Glu91 the composition is skewed to basic and acidic residues. The span at Lys92 to Lys102 shows a compositional bias: basic residues. A compositionally biased stretch (polar residues) spans Ala127 to Asn139. A Q motif motif is present at residues Ile182–Ala209. Residues Trp212–Ala396 form the Helicase ATP-binding domain. ATP is bound at residue Ala225–Thr232. The DEAD box motif lies at Asp342–Asp345. Residues Gly433–Ser566 enclose the Helicase C-terminal domain.

The protein belongs to the DEAD box helicase family. DDX5/DBP2 subfamily.

It localises to the nucleus. The protein localises to the nucleolus. The catalysed reaction is ATP + H2O = ADP + phosphate + H(+). ATP-dependent RNA helicase required for 60S ribosomal subunit synthesis. Involved in efficient pre-rRNA processing, predominantly at site A3, which is necessary for the normal formation of 25S and 5.8S rRNAs. This Chaetomium globosum (strain ATCC 6205 / CBS 148.51 / DSM 1962 / NBRC 6347 / NRRL 1970) (Soil fungus) protein is ATP-dependent RNA helicase DBP3 (DBP3).